We begin with the raw amino-acid sequence, 407 residues long: 1-deoxy-D-xylulose 5-phosphate reductoisomerase (407 aa).

The NADPH site is built by Thr22, Gly23, Ser24, Ile25, Gly48, Asn51, and Asn128. A 1-deoxy-D-xylulose 5-phosphate-binding site is contributed by Lys129. Glu130 contacts NADPH. Asp152 is a Mn(2+) binding site. 4 residues coordinate 1-deoxy-D-xylulose 5-phosphate: Ser153, Glu154, Ser178, and His201. A Mn(2+)-binding site is contributed by Glu154. Residue Gly207 participates in NADPH binding. 1-deoxy-D-xylulose 5-phosphate-binding residues include Ser214, Asn219, Lys220, and Glu223. Position 223 (Glu223) interacts with Mn(2+).

It belongs to the DXR family. It depends on Mg(2+) as a cofactor. Requires Mn(2+) as cofactor.

It catalyses the reaction 2-C-methyl-D-erythritol 4-phosphate + NADP(+) = 1-deoxy-D-xylulose 5-phosphate + NADPH + H(+). It functions in the pathway isoprenoid biosynthesis; isopentenyl diphosphate biosynthesis via DXP pathway; isopentenyl diphosphate from 1-deoxy-D-xylulose 5-phosphate: step 1/6. Its function is as follows. Catalyzes the NADPH-dependent rearrangement and reduction of 1-deoxy-D-xylulose-5-phosphate (DXP) to 2-C-methyl-D-erythritol 4-phosphate (MEP). The polypeptide is 1-deoxy-D-xylulose 5-phosphate reductoisomerase (Mycobacterium avium (strain 104)).